The chain runs to 979 residues: Zinc finger BED domain-containing protein 6 (979 aa).

Residues 1–89 (MSVCTLSVPV…ILAKKFSKDL (89 aa)) form a required for nucleolar localization region. The BED-type 1 zinc-finger motif lies at 130–187 (AKTSIVWHFFHVDPQYTWRAICNLCEKSVSRGKPGSHLGTSTLQRHLQARHSPHWTRA). Cys151, Cys154, His175, and His180 together coordinate Zn(2+). Residues 207-232 (PSSGSNGSFEYIPTDPLDDNRMGKKH) are disordered. The BED-type 2 zinc finger occupies 264–321 (AKTSAVWNFFYTDPQHISRAVCNICKRSVSRGRPGSHLGTSTLQRHLQATHPIHWAVA). Residues Cys285, Cys288, His309, and His314 each coordinate Zn(2+). Positions 333 to 383 (DEAETERSDLLSDTLHGEKSTGSQDLTAEDLSDSDSDEPMLEVENRSESPI) are disordered. Basic and acidic residues predominate over residues 337 to 351 (TERSDLLSDTLHGEK). Acidic residues predominate over residues 359-373 (TAEDLSDSDSDEPML). The residue at position 381 (Ser381) is a Phosphoserine. Residues 866-948 (VVDEYFKEKY…EQLMFLKMNL (83 aa)) are HATC (Hobo-Ac-Tam3) domain.

As to expression, expressed in pancreatic islet cells (at protein level).

It localises to the nucleus. Its subcellular location is the nucleolus. The protein localises to the cytoplasm. Transcriptional repressor which binds to the consensus sequence 5'-GCTCGC-3', transcription regulation may be tissue-specific. Regulates the expression of target genes such as: IGF2, PGAP6/TMEM8, ENHO, and PIANP. Acts as a transcriptional repressor of growth factor IGF2, thereby negatively regulating postnatal growth of muscles and internal organs, especially in females. Negatively regulates myoblast differentiation and myoblast mitochondrial activity via its regulation of IGF2 transcription. Negatively regulates the cell cycle of myoblasts, potentially via transcriptional regulation of the E2F family of transcription factors such as: E2F1 and E2F2. Positively regulates the cell cycle and survival of pancreatic beta cells. Binds to the CDH2 gene and may directly repress CDH2 transcription. Probably by controlling CDH2 expression, regulates pancreatic beta cell adhesion, and formation of cell-to-cell junctions between pancreatic beta cells and neural crest stem cells. May also play a role in embryonic beta cell differentiation. May play a role in insulin sensitivity and glucose clearance. This Homo sapiens (Human) protein is Zinc finger BED domain-containing protein 6.